Here is a 1393-residue protein sequence, read N- to C-terminus: Protein strawberry notch homolog 1 (1393 aa).

The interval 129 to 148 (STRPSVSAPTVRNAMTSAPS) is disordered. S148 carries the phosphoserine modification. K149 bears the N6-acetyllysine mark. 2 positions are modified to phosphoserine: S162 and S214. Residue K413 is modified to N6-acetyllysine. A disordered region spans residues 687-840 (APSNNSSPRD…ANSNTNSNSS (154 aa)). Phosphoserine occurs at positions 692, 693, and 697. Over residues 697-716 (SPCKENKIKKRKGEEITREA) the composition is skewed to basic and acidic residues. The segment covering 733 to 747 (SGSESDASDNEESDY) has biased composition (acidic residues). Phosphoserine is present on residues S754, S755, and S768. Acidic residues predominate over residues 756–775 (GDDDDFNPFLDESNEDDEND). Residues 781-793 (KDHKKNKEKKKKK) show a composition bias toward basic residues. Residues S794 and S815 each carry the phosphoserine modification. Over residues 824–840 (PAPNSTPANSNTNSNSS) the composition is skewed to low complexity. A coiled-coil region spans residues 843 to 870 (TSQDAVERAQQMKKDLLDKLEKLAEDLP). An N6-acetyllysine modification is found at K1222. Position 1386 is a phosphoserine (S1386).

The protein belongs to the SBNO family.

The protein resides in the nucleus. Functionally, plays a crucial role in the regulation of neural stem cells (NSCs) proliferation. Enhances the phosphorylation of GSK3B through the PI3K-Akt signaling pathway, thereby upregulating the Wnt/beta-catenin signaling pathway and promoting the proliferation of NSCs. Improves ischemic stroke recovery while inhibiting neuroinflammation through small extracellular vesicles (sEVs)-mediated mechanism. Enhances the secretion of sEVs from NSCs, which in turn inhibit both the MAPK and NF-kappaB pathways in microglia. This inhibition suppresses the pro-inflammatory M1 polarization of microglia, promoting a shift towards the M2 anti-inflammatory phenotype, which is beneficial for reducing neuroinflammation. This chain is Protein strawberry notch homolog 1 (SBNO1), found in Homo sapiens (Human).